Consider the following 328-residue polypeptide: uncharacterized protein (328 aa).

Serine 170 carries the phosphoserine modification.

It is found in the cytoplasm. Its subcellular location is the nucleus. This is an uncharacterized protein from Schizosaccharomyces pombe (strain 972 / ATCC 24843) (Fission yeast).